Here is a 597-residue protein sequence, read N- to C-terminus: tRNA uridine 5-carboxymethylaminomethyl modification enzyme MnmG (597 aa).

11–16 (GAGHAG) is a binding site for FAD. 275–289 (SPRYCPSIEEKIERY) lines the NAD(+) pocket.

This sequence belongs to the MnmG family. Homodimer. Heterotetramer of two MnmE and two MnmG subunits. The cofactor is FAD.

It localises to the cytoplasm. NAD-binding protein involved in the addition of a carboxymethylaminomethyl (cmnm) group at the wobble position (U34) of certain tRNAs, forming tRNA-cmnm(5)s(2)U34. The sequence is that of tRNA uridine 5-carboxymethylaminomethyl modification enzyme MnmG from Endomicrobium trichonymphae.